The following is a 347-amino-acid chain: Lipoyl synthase (347 aa).

Positions 77, 82, 88, 103, 107, 110, and 317 each coordinate [4Fe-4S] cluster. In terms of domain architecture, Radical SAM core spans 89–306 (FADGTATFMI…MDYGKKIGFF (218 aa)).

The protein belongs to the radical SAM superfamily. Lipoyl synthase family. The cofactor is [4Fe-4S] cluster.

The protein localises to the cytoplasm. The catalysed reaction is [[Fe-S] cluster scaffold protein carrying a second [4Fe-4S](2+) cluster] + N(6)-octanoyl-L-lysyl-[protein] + 2 oxidized [2Fe-2S]-[ferredoxin] + 2 S-adenosyl-L-methionine + 4 H(+) = [[Fe-S] cluster scaffold protein] + N(6)-[(R)-dihydrolipoyl]-L-lysyl-[protein] + 4 Fe(3+) + 2 hydrogen sulfide + 2 5'-deoxyadenosine + 2 L-methionine + 2 reduced [2Fe-2S]-[ferredoxin]. It participates in protein modification; protein lipoylation via endogenous pathway; protein N(6)-(lipoyl)lysine from octanoyl-[acyl-carrier-protein]: step 2/2. Functionally, catalyzes the radical-mediated insertion of two sulfur atoms into the C-6 and C-8 positions of the octanoyl moiety bound to the lipoyl domains of lipoate-dependent enzymes, thereby converting the octanoylated domains into lipoylated derivatives. In Psychrobacter cryohalolentis (strain ATCC BAA-1226 / DSM 17306 / VKM B-2378 / K5), this protein is Lipoyl synthase.